A 257-amino-acid chain; its full sequence is MLNLYGRKFSSRLMLGTAQYPSPAILRNAIHKSNIEIVTVSLRRETAGGKQGGQFWQFLKELDITVLPNTAGCYTVKEAVTTAQLARDLFKTSWIKLEIIGNPDTLQPNVFSLIEAAQILNSDGFQIFAYTTDDLIVAERLLDVGCRVIMPWCAPIGSGQGPHNTDGLRSIRAYLPDVTLVIDAGIGRPSHAAVAMELGYDAVLLNTAVAKAGDPVLMAQAFAQAVQAGRMGYKAGILKARNIAVPSTPIVGKAVFS.

Lys96 acts as the Schiff-base intermediate with DXP in catalysis. 1-deoxy-D-xylulose 5-phosphate is bound by residues Gly157, 184-185, and 206-207; these read AG and NT.

It belongs to the ThiG family. In terms of assembly, homotetramer. Forms heterodimers with either ThiH or ThiS.

Its subcellular location is the cytoplasm. It carries out the reaction [ThiS sulfur-carrier protein]-C-terminal-Gly-aminoethanethioate + 2-iminoacetate + 1-deoxy-D-xylulose 5-phosphate = [ThiS sulfur-carrier protein]-C-terminal Gly-Gly + 2-[(2R,5Z)-2-carboxy-4-methylthiazol-5(2H)-ylidene]ethyl phosphate + 2 H2O + H(+). The protein operates within cofactor biosynthesis; thiamine diphosphate biosynthesis. Its function is as follows. Catalyzes the rearrangement of 1-deoxy-D-xylulose 5-phosphate (DXP) to produce the thiazole phosphate moiety of thiamine. Sulfur is provided by the thiocarboxylate moiety of the carrier protein ThiS. In vitro, sulfur can be provided by H(2)S. The polypeptide is Thiazole synthase (Bartonella quintana (strain Toulouse) (Rochalimaea quintana)).